A 111-amino-acid polypeptide reads, in one-letter code: Small ribosomal subunit protein bS6 (111 aa).

It belongs to the bacterial ribosomal protein bS6 family.

In terms of biological role, binds together with bS18 to 16S ribosomal RNA. The sequence is that of Small ribosomal subunit protein bS6 from Francisella tularensis subsp. tularensis (strain FSC 198).